The sequence spans 276 residues: Dermonecrotic toxin LsaSicTox-alphaIB2iii (276 aa).

Residue histidine 5 is part of the active site. Mg(2+) contacts are provided by glutamate 25 and aspartate 27. Histidine 41 (nucleophile) is an active-site residue. 2 disulfides stabilise this stretch: cysteine 45-cysteine 51 and cysteine 47-cysteine 190. Aspartate 85 serves as a coordination point for Mg(2+). 2 N-linked (GlcNAc...) asparagine glycosylation sites follow: asparagine 129 and asparagine 253.

Belongs to the arthropod phospholipase D family. Class II subfamily. Mg(2+) serves as cofactor. As to expression, expressed by the venom gland.

It is found in the secreted. It catalyses the reaction an N-(acyl)-sphingosylphosphocholine = an N-(acyl)-sphingosyl-1,3-cyclic phosphate + choline. It carries out the reaction an N-(acyl)-sphingosylphosphoethanolamine = an N-(acyl)-sphingosyl-1,3-cyclic phosphate + ethanolamine. The enzyme catalyses a 1-acyl-sn-glycero-3-phosphocholine = a 1-acyl-sn-glycero-2,3-cyclic phosphate + choline. The catalysed reaction is a 1-acyl-sn-glycero-3-phosphoethanolamine = a 1-acyl-sn-glycero-2,3-cyclic phosphate + ethanolamine. Dermonecrotic toxins cleave the phosphodiester linkage between the phosphate and headgroup of certain phospholipids (sphingolipid and lysolipid substrates), forming an alcohol (often choline) and a cyclic phosphate. This toxin acts on sphingomyelin (SM). It may also act on ceramide phosphoethanolamine (CPE), lysophosphatidylcholine (LPC) and lysophosphatidylethanolamine (LPE), but not on lysophosphatidylserine (LPS), and lysophosphatidylglycerol (LPG). It acts by transphosphatidylation, releasing exclusively cyclic phosphate products as second products. Induces dermonecrosis, hemolysis, increased vascular permeability, edema, inflammatory response, and platelet aggregation. This chain is Dermonecrotic toxin LsaSicTox-alphaIB2iii, found in Loxosceles sabina (Tucson recluse spider).